The primary structure comprises 217 residues: Ras-related protein Rab-19 (217 aa).

Residues Ser-26, Val-28, Gly-29, Lys-30, Thr-31, Cys-32, Tyr-42, Ser-43, Glu-44, Ser-45, and Thr-49 each coordinate GTP. Thr-31 provides a ligand contact to Mg(2+). The Switch 1 motif lies at 39–54 (SGVYSESQQNTIGVDF). Mg(2+) contacts are provided by Thr-49 and Asp-72. The Switch 2 signature appears at 74 to 89 (AGQERFRTITQSYYRS). GTP-binding residues include Gly-75, Asn-130, Lys-131, Asp-133, Ser-161, Ala-162, and Lys-163. 2 S-geranylgeranyl cysteine lipidation sites follow: Cys-215 and Cys-217. Cysteine methyl ester is present on Cys-217.

Belongs to the small GTPase superfamily. Rab family. Mg(2+) is required as a cofactor.

The protein resides in the cell membrane. It catalyses the reaction GTP + H2O = GDP + phosphate + H(+). Regulated by guanine nucleotide exchange factors (GEFs) which promote the exchange of bound GDP for free GTP. Regulated by GTPase activating proteins (GAPs) which increase the GTP hydrolysis activity. Inhibited by GDP dissociation inhibitors (GDIs). Its function is as follows. The small GTPases Rab are key regulators of intracellular membrane trafficking, from the formation of transport vesicles to their fusion with membranes. Rabs cycle between an inactive GDP-bound form and an active GTP-bound form that is able to recruit to membranes different set of downstream effectors directly responsible for vesicle formation, movement, tethering and fusion. In Rattus norvegicus (Rat), this protein is Ras-related protein Rab-19.